The primary structure comprises 240 residues: UDP-2,3-diacylglucosamine hydrolase (240 aa).

Mn(2+)-binding residues include Asp8, His10, Asp41, Asn78, and His113. 78-79 (NR) is a substrate binding site. Substrate-binding residues include Asp121, Ser159, Asn163, Lys166, and His194. Mn(2+)-binding residues include His194 and His196.

This sequence belongs to the LpxH family. It depends on Mn(2+) as a cofactor.

The protein localises to the cell inner membrane. The enzyme catalyses UDP-2-N,3-O-bis[(3R)-3-hydroxytetradecanoyl]-alpha-D-glucosamine + H2O = 2-N,3-O-bis[(3R)-3-hydroxytetradecanoyl]-alpha-D-glucosaminyl 1-phosphate + UMP + 2 H(+). Its pathway is glycolipid biosynthesis; lipid IV(A) biosynthesis; lipid IV(A) from (3R)-3-hydroxytetradecanoyl-[acyl-carrier-protein] and UDP-N-acetyl-alpha-D-glucosamine: step 4/6. Hydrolyzes the pyrophosphate bond of UDP-2,3-diacylglucosamine to yield 2,3-diacylglucosamine 1-phosphate (lipid X) and UMP by catalyzing the attack of water at the alpha-P atom. Involved in the biosynthesis of lipid A, a phosphorylated glycolipid that anchors the lipopolysaccharide to the outer membrane of the cell. The protein is UDP-2,3-diacylglucosamine hydrolase of Shewanella baltica (strain OS223).